The sequence spans 776 residues: Semaphorin-4F (776 aa).

Positions 1 to 39 (MLARAERPRPGPRPPPVFPFPPPLSLLLLLAILSAPVCG) are cleaved as a signal peptide. Residues 40-665 (RVPRSVPRTS…GPSNRAHTVV (626 aa)) are Extracellular-facing. In terms of domain architecture, Sema spans 47–515 (RTSLPISEAD…SHTEVTQVNT (469 aa)). N69 carries N-linked (GlcNAc...) asparagine glycosylation. Residues C117 and C127 are joined by a disulfide bond. Residue N138 is glycosylated (N-linked (GlcNAc...) asparagine). Disulfide bonds link C145–C154, C278–C389, and C302–C348. A glycan (N-linked (GlcNAc...) asparagine) is linked at N514. In terms of domain architecture, PSI spans 517–568 (NCGRLQSCSECILAQDPVCAWSFRLDACVAHAGEHRGMVQDIESADVSSLCP). 3 cysteine pairs are disulfide-bonded: C518–C535, C527–C544, and C592–C633. The Ig-like C2-type domain occupies 585–640 (VGHVVLPCSPSSAWASCVWHQPSGVTALTPRRDGLEVVVTPGAMGAYACECQEGGA). A helical transmembrane segment spans residues 666 to 686 (GAGLVGFLLGVLAASLTLLLI). The Cytoplasmic segment spans residues 687–776 (GRRQQRRRQR…PLATCDETSI (90 aa)). The interval 702–741 (DKVGLDLGAPPSGTTSYSQDPPSPSPEDERLPLALGKRGS) is disordered. Phosphoserine is present on residues S724 and S726. A PDZ-binding motif is present at residues 774–776 (TSI).

This sequence belongs to the semaphorin family. Interacts (via PDZ-binding motif) with DLG4/SAP90 (via PDZ domain 2); this interaction may promote translocation of DLG4/SAP90 to the membrane. As to expression, expressed at low levels in the developing embryo. Expressed at high levels in the lung and adult central nervous system, including the dorsal root ganglia.

Its subcellular location is the cell membrane. The protein resides in the postsynaptic density. It localises to the perikaryon. It is found in the cell projection. The protein localises to the dendrite. Functionally, probable cell surface receptor that regulates oligodendroglial precursor cell migration. Might also regulate differentiation of oligodendroglial precursor cells. Has growth cone collapse activity against retinal ganglion-cell axons. The sequence is that of Semaphorin-4F (Sema4f) from Rattus norvegicus (Rat).